The following is a 281-amino-acid chain: Transcription factor HES-1 (281 aa).

The segment at 1 to 44 is disordered; it reads MPADIMEKNSSSPVAATPASVNTTPDKPKTASEHRKSSKPIMEK. Residues 10 to 21 are compositionally biased toward low complexity; the sequence is SSSPVAATPASV. Residues 26–35 show a composition bias toward basic and acidic residues; the sequence is DKPKTASEHR. The region spanning 34–91 is the bHLH domain; that stretch reads HRKSSKPIMEKRRRARINESLSQLKTLILDALKKDSSRHSKLEKADILEMTVKHLRNL. An Orange domain is found at 110–143; sequence YRAGFSECMNEVTRFLSTCEGVNTEVRTRLLGHL. Disordered stretches follow at residues 158 to 206 and 255 to 281; these read QAHP…PCKL and TSVG…PWRN. 2 stretches are compositionally biased toward pro residues: residues 164–174 and 182–201; these read QAPPPPPPSGP and FAPP…PPGS. Positions 255–272 are enriched in polar residues; it reads TSVGPNAVSPSSGSSLTA. Residues 276–279 carry the WRPW motif motif; sequence WRPW.

As to quaternary structure, interacts with SIRT1. Interacts weakly with TLE2. Interacts with HES6. Transcription repression requires formation of a complex with a corepressor protein of the Groucho/TLE family. Interacts (via WPRW motif) with TLE1. Interacts with an FA complex, composed of FANCA, FANCF, FANCG and FANCL, but not of FANCC, nor FANCE. Present in all tissues examined but highest in epithelial cells and in mesoderm-derived tissues such as embryonal muscle cells.

It is found in the nucleus. Its function is as follows. Transcriptional repressor of genes that require a bHLH protein for their transcription. May act as a negative regulator of myogenesis by inhibiting the functions of MYOD1 and ASH1. Binds DNA on N-box motifs: 5'-CACNAG-3' with high affinity and on E-box motifs: 5'-CANNTG-3' with low affinity. May play a role in a functional FA core complex response to DNA cross-link damage, being required for the stability and nuclear localization of FA core complex proteins, as well as for FANCD2 monoubiquitination in response to DNA damage. This chain is Transcription factor HES-1 (Hes1), found in Rattus norvegicus (Rat).